The following is a 71-amino-acid chain: uncharacterized protein (71 aa).

A helical membrane pass occupies residues 37–57 (IGVGVSDGVSAGVGVGVAMII).

It localises to the membrane. This is an uncharacterized protein from Dictyostelium discoideum (Social amoeba).